The sequence spans 198 residues: Protein RD3-like (198 aa).

Positions 28 to 57 (KTLLRELKWHLKERERLIQEIENEQKVKKT) form a coiled coil. The disordered stretch occupies residues 133 to 168 (GSEQEDLEDSGSMDCSAPSVIQGDSSKRADKDEIPT). The span at 157–166 (SSKRADKDEI) shows a compositional bias: basic and acidic residues.

The sequence is that of Protein RD3-like (RD3L) from Homo sapiens (Human).